Reading from the N-terminus, the 359-residue chain is Dihydroorotate dehydrogenase (quinone) (359 aa).

Residues 68–72 (AGFDK) and Thr-92 contribute to the FMN site. Residue Lys-72 coordinates substrate. 117-121 (NRMGF) contributes to the substrate binding site. FMN-binding residues include Asn-145 and Asn-176. Asn-176 serves as a coordination point for substrate. Ser-179 serves as the catalytic Nucleophile. Residue Asn-181 coordinates substrate. Residues Lys-212 and Thr-240 each coordinate FMN. 241-242 (NT) contributes to the substrate binding site. FMN-binding positions include Gly-266, Gly-295, and 316–317 (YT).

It belongs to the dihydroorotate dehydrogenase family. Type 2 subfamily. In terms of assembly, monomer. It depends on FMN as a cofactor.

Its subcellular location is the cell membrane. The enzyme catalyses (S)-dihydroorotate + a quinone = orotate + a quinol. It functions in the pathway pyrimidine metabolism; UMP biosynthesis via de novo pathway; orotate from (S)-dihydroorotate (quinone route): step 1/1. In terms of biological role, catalyzes the conversion of dihydroorotate to orotate with quinone as electron acceptor. The sequence is that of Dihydroorotate dehydrogenase (quinone) from Corynebacterium striatum.